The chain runs to 339 residues: Cyclin-D1-1 (339 aa).

It belongs to the cyclin family. Cyclin D subfamily. As to quaternary structure, interacts with CDKA-1 and KRP6/ICK4. Expressed in roots, leaves and flowers.

Its function is as follows. May activate cell cycle in the root apical meristem (RAM) and promote embryonic root (radicle) protrusion. The chain is Cyclin-D1-1 (CYCD1-1) from Arabidopsis thaliana (Mouse-ear cress).